Reading from the N-terminus, the 183-residue chain is UPF0200 protein MmarC7_0527 (183 aa).

8-15 (GMPGSGKS) is a binding site for ATP.

This sequence belongs to the UPF0200 family.

The sequence is that of UPF0200 protein MmarC7_0527 from Methanococcus maripaludis (strain C7 / ATCC BAA-1331).